The primary structure comprises 240 residues: uncharacterized protein (240 aa).

The tract at residues 93–160 (QEASGCTVGE…AGGGAAASGQ (68 aa)) is disordered. Composition is skewed to low complexity over residues 110-119 (AQPSQPAQGG) and 129-150 (GGAE…PAEN).

This is an uncharacterized protein from Streptomyces viridochromogenes.